A 228-amino-acid polypeptide reads, in one-letter code: ATP-dependent dethiobiotin synthetase BioD (228 aa).

12–17 is an ATP binding site; sequence DVGKTY. A Mg(2+)-binding site is contributed by threonine 16. The active site involves lysine 37. ATP is bound by residues aspartate 53, 114-117, 174-175, 203-205, and asparagine 210; these read EGMG, ND, and PFI. Mg(2+)-binding residues include aspartate 53 and glutamate 114.

This sequence belongs to the dethiobiotin synthetase family. As to quaternary structure, homodimer. Requires Mg(2+) as cofactor.

The protein resides in the cytoplasm. The enzyme catalyses (7R,8S)-7,8-diammoniononanoate + CO2 + ATP = (4R,5S)-dethiobiotin + ADP + phosphate + 3 H(+). Its pathway is cofactor biosynthesis; biotin biosynthesis; biotin from 7,8-diaminononanoate: step 1/2. Functionally, catalyzes a mechanistically unusual reaction, the ATP-dependent insertion of CO2 between the N7 and N8 nitrogen atoms of 7,8-diaminopelargonic acid (DAPA, also called 7,8-diammoniononanoate) to form a ureido ring. This Nitrosopumilus maritimus (strain SCM1) protein is ATP-dependent dethiobiotin synthetase BioD.